We begin with the raw amino-acid sequence, 253 residues long: Malonyl-[acyl-carrier protein] O-methyltransferase (253 aa).

It belongs to the methyltransferase superfamily.

It catalyses the reaction malonyl-[ACP] + S-adenosyl-L-methionine = malonyl-[ACP] methyl ester + S-adenosyl-L-homocysteine. It functions in the pathway cofactor biosynthesis; biotin biosynthesis. Its function is as follows. Converts the free carboxyl group of a malonyl-thioester to its methyl ester by transfer of a methyl group from S-adenosyl-L-methionine (SAM). It allows to synthesize pimeloyl-ACP via the fatty acid synthetic pathway. This Pectobacterium atrosepticum (strain SCRI 1043 / ATCC BAA-672) (Erwinia carotovora subsp. atroseptica) protein is Malonyl-[acyl-carrier protein] O-methyltransferase.